Reading from the N-terminus, the 319-residue chain is Acetyl-coenzyme A carboxylase carboxyl transferase subunit alpha (319 aa).

The region spanning 43–296 is the CoA carboxyltransferase C-terminal domain; sequence LKQKSVELTQ…KTQLLLDLVE (254 aa).

It belongs to the AccA family. In terms of assembly, acetyl-CoA carboxylase is a heterohexamer composed of biotin carboxyl carrier protein (AccB), biotin carboxylase (AccC) and two subunits each of ACCase subunit alpha (AccA) and ACCase subunit beta (AccD).

The protein localises to the cytoplasm. It catalyses the reaction N(6)-carboxybiotinyl-L-lysyl-[protein] + acetyl-CoA = N(6)-biotinyl-L-lysyl-[protein] + malonyl-CoA. It participates in lipid metabolism; malonyl-CoA biosynthesis; malonyl-CoA from acetyl-CoA: step 1/1. Component of the acetyl coenzyme A carboxylase (ACC) complex. First, biotin carboxylase catalyzes the carboxylation of biotin on its carrier protein (BCCP) and then the CO(2) group is transferred by the carboxyltransferase to acetyl-CoA to form malonyl-CoA. The polypeptide is Acetyl-coenzyme A carboxylase carboxyl transferase subunit alpha (Blochmanniella floridana).